An 83-amino-acid chain; its full sequence is MIYKAVFVCLVLVLLGDVFCSPRNSGGGTLNDNPFEKRTDCRFVGAKCTKANNPCVGKVCNGYQLYCPVDDDHCIMKLTFIPG.

A signal peptide spans 1–20 (MIYKAVFVCLVLVLLGDVFC). Positions 21-36 (SPRNSGGGTLNDNPFE) are excised as a propeptide. Residue Pro82 is modified to Proline amide.

In terms of processing, contains 3 disulfide bonds. As to expression, expressed by acrorhagi.

Its subcellular location is the secreted. It localises to the nematocyst. In terms of biological role, toxin. This chain is U-actitoxin-Aeq6b, found in Actinia equina (Beadlet anemone).